Reading from the N-terminus, the 286-residue chain is Glucose import system permease protein GlcT (286 aa).

6 consecutive transmembrane segments (helical) span residues threonine 6–tryptophan 26, valine 71–leucine 91, isoleucine 103–phenylalanine 123, leucine 154–phenylalanine 174, isoleucine 199–serine 219, and valine 260–isoleucine 280. One can recognise an ABC transmembrane type-1 domain in the interval leucine 63–tyrosine 275.

Belongs to the binding-protein-dependent transport system permease family. The complex is composed of two ATP-binding proteins (GlcV), two transmembrane proteins (GlcT and GlcU) and a solute-binding protein (GlcS).

Its subcellular location is the cell membrane. Functionally, part of the ABC transporter complex GlcSTUV involved in glucose uptake. Responsible for the translocation of the substrate across the membrane. The sequence is that of Glucose import system permease protein GlcT from Saccharolobus solfataricus (strain ATCC 35092 / DSM 1617 / JCM 11322 / P2) (Sulfolobus solfataricus).